A 550-amino-acid polypeptide reads, in one-letter code: Chaperonin GroEL (550 aa).

ATP-binding positions include 30-33, Lys51, 87-91, Gly415, and Asp496; these read TLGP and DGTTT.

Belongs to the chaperonin (HSP60) family. As to quaternary structure, forms a cylinder of 14 subunits composed of two heptameric rings stacked back-to-back. Interacts with the co-chaperonin GroES.

The protein resides in the cytoplasm. The enzyme catalyses ATP + H2O + a folded polypeptide = ADP + phosphate + an unfolded polypeptide.. Together with its co-chaperonin GroES, plays an essential role in assisting protein folding. The GroEL-GroES system forms a nano-cage that allows encapsulation of the non-native substrate proteins and provides a physical environment optimized to promote and accelerate protein folding. The sequence is that of Chaperonin GroEL from Rickettsia typhi (strain ATCC VR-144 / Wilmington).